Consider the following 311-residue polypeptide: MEMAAPNGGGAAGMSSPVNGASAPATPGTPAPLFAGPRVDSLSYERKSMPRCKCLPAAVAEAWAPSAHGCVVEIPAPDVSLTRKLGAEFVGTFILIFFATAAPIVNQKYGGAISPFGNAACAGLAVTTIILSTGHISGAHLNPSLTIAFAALRHFPWLQVPAYVAVQVLGSICAGFALKGVFHPFLSGGVTVPDPTISTAQAFFTEFIITFNLLFVVTAVATDTRAVGELAGIAVGAAVTLNILIAGPTTGGSMNPVRTLGPAVAAGNYRQLWIYLIAPTLGAVAGAGVYTAVKLRDENGETPRPQRSFRR.

Residues 1–34 are disordered; that stretch reads MEMAAPNGGGAAGMSSPVNGASAPATPGTPAPLF. The span at 20-34 shows a compositional bias: low complexity; sequence GASAPATPGTPAPLF. The next 2 helical transmembrane spans lie at 85-105 and 111-131; these read LGAE…APIV and GAIS…TIIL. The NPA 1 motif lies at 142–144; the sequence is NPS. 3 helical membrane passes run 158 to 178, 202 to 222, and 226 to 246; these read LQVP…GFAL, AFFT…AVAT, and AVGE…ILIA. An NPA 2 motif is present at residues 255–257; sequence NPV. Residues 273-293 traverse the membrane as a helical segment; the sequence is WIYLIAPTLGAVAGAGVYTAV.

It belongs to the MIP/aquaporin (TC 1.A.8) family. NIP (TC 1.A.8.12) subfamily. As to expression, expressed in roots and leaves.

The protein localises to the membrane. Functionally, aquaporins facilitate the transport of water and small neutral solutes across cell membranes. The sequence is that of Aquaporin NIP3-1 (NIP3-1) from Oryza sativa subsp. japonica (Rice).